Consider the following 676-residue polypeptide: Methionine--tRNA ligase (676 aa).

Residues 11–21 carry the 'HIGH' region motif; it reads PYANGPCHLGH. The Zn(2+) site is built by Cys-143, Cys-146, Cys-156, and Cys-159. The 'KMSKS' region signature appears at 326–330; the sequence is KMSTS. Residue Thr-329 coordinates ATP. Residues 581 to 676 form the tRNA-binding domain; that stretch reads EFGKVKLVVG…TEGNVGEYIK (96 aa).

This sequence belongs to the class-I aminoacyl-tRNA synthetase family. MetG type 1 subfamily. Homodimer. Requires Zn(2+) as cofactor.

The protein localises to the cytoplasm. The enzyme catalyses tRNA(Met) + L-methionine + ATP = L-methionyl-tRNA(Met) + AMP + diphosphate. Its function is as follows. Is required not only for elongation of protein synthesis but also for the initiation of all mRNA translation through initiator tRNA(fMet) aminoacylation. The chain is Methionine--tRNA ligase from Methanosphaera stadtmanae (strain ATCC 43021 / DSM 3091 / JCM 11832 / MCB-3).